The sequence spans 880 residues: DNA polymerase I (880 aa).

The 95-residue stretch at 174–268 (TPEQIIDMKG…SGLEYQGFNR (95 aa)) folds into the 5'-3' exonuclease domain. In terms of domain architecture, 3'-5' exonuclease spans 302–470 (DINVKTVTDV…LREKLVQELE (169 aa)).

This sequence belongs to the DNA polymerase type-A family. As to quaternary structure, single-chain monomer with multiple functions.

It catalyses the reaction DNA(n) + a 2'-deoxyribonucleoside 5'-triphosphate = DNA(n+1) + diphosphate. In addition to polymerase activity, this DNA polymerase exhibits 3'-5' and 5'-3' exonuclease activity. This is DNA polymerase I (polA) from Bacillus subtilis (strain 168).